Reading from the N-terminus, the 267-residue chain is Type II pantothenate kinase (267 aa).

6-13 provides a ligand contact to ATP; sequence DAGGTLIK. Catalysis depends on Glu70, which acts as the Proton acceptor. ATP-binding positions include Thr99, 121-125, Tyr137, and Ser225; that span reads GGMIQ.

This sequence belongs to the type II pantothenate kinase family. Homodimer.

The protein resides in the cytoplasm. The enzyme catalyses (R)-pantothenate + ATP = (R)-4'-phosphopantothenate + ADP + H(+). It functions in the pathway cofactor biosynthesis; coenzyme A biosynthesis; CoA from (R)-pantothenate: step 1/5. Its function is as follows. Catalyzes the phosphorylation of pantothenate (Pan), the first step in CoA biosynthesis. This is Type II pantothenate kinase from Staphylococcus aureus (strain Mu50 / ATCC 700699).